The chain runs to 594 residues: UV-stimulated scaffold protein A homolog (594 aa).

The tract at residues Arg24–Asp170 is VHS-like. Residues Asp170–Asn198 are a coiled coil. The segment at Arg466–Ile493 adopts a UVSSA-type zinc-finger fold. Zn(2+) is bound by residues Cys469, Cys479, Cys487, and His490. The stretch at Ile503 to Arg540 forms a coiled coil. The segment at Glu533–Leu558 is disordered. A compositionally biased stretch (basic and acidic residues) spans His544–Leu558.

Belongs to the UVSSA family.

The protein resides in the chromosome. Functionally, factor involved in transcription-coupled nucleotide excision repair (TC-NER) in response to UV damage. TC-NER allows RNA polymerase II-blocking lesions to be rapidly removed from the transcribed strand of active genes. The sequence is that of UV-stimulated scaffold protein A homolog from Caenorhabditis elegans.